A 675-amino-acid chain; its full sequence is UvrABC system protein B (675 aa).

Residues 32–417 (EGLSDGLAYQ…EHAGQVVEQV (386 aa)) form the Helicase ATP-binding domain. ATP is bound at residue 45–52 (GVTGSGKT). Positions 98–121 (YYDYYQPEAYVPSRDLFIEKDSAI) match the Beta-hairpin motif. Residues 436 to 602 (QVDDLMSEIN…QIKKQVKDII (167 aa)) enclose the Helicase C-terminal domain. Residues 634-669 (IKEIAKLEKAMQQAARDLQFEEAAVLRDRIRDIKEN) form the UVR domain.

This sequence belongs to the UvrB family. In terms of assembly, forms a heterotetramer with UvrA during the search for lesions. Interacts with UvrC in an incision complex.

The protein localises to the cytoplasm. Functionally, the UvrABC repair system catalyzes the recognition and processing of DNA lesions. A damage recognition complex composed of 2 UvrA and 2 UvrB subunits scans DNA for abnormalities. Upon binding of the UvrA(2)B(2) complex to a putative damaged site, the DNA wraps around one UvrB monomer. DNA wrap is dependent on ATP binding by UvrB and probably causes local melting of the DNA helix, facilitating insertion of UvrB beta-hairpin between the DNA strands. Then UvrB probes one DNA strand for the presence of a lesion. If a lesion is found the UvrA subunits dissociate and the UvrB-DNA preincision complex is formed. This complex is subsequently bound by UvrC and the second UvrB is released. If no lesion is found, the DNA wraps around the other UvrB subunit that will check the other stand for damage. This is UvrABC system protein B from Neisseria meningitidis serogroup B (strain ATCC BAA-335 / MC58).